We begin with the raw amino-acid sequence, 241 residues long: Probable porphobilinogen deaminase (241 aa).

Belongs to the HMBS family.

It catalyses the reaction 4 porphobilinogen + H2O = hydroxymethylbilane + 4 NH4(+). Its pathway is porphyrin-containing compound metabolism; protoporphyrin-IX biosynthesis; coproporphyrinogen-III from 5-aminolevulinate: step 2/4. Its function is as follows. Tetrapolymerization of the monopyrrole PBG into the hydroxymethylbilane pre-uroporphyrinogen in several discrete steps. In Chlamydia trachomatis serovar D (strain ATCC VR-885 / DSM 19411 / UW-3/Cx), this protein is Probable porphobilinogen deaminase (hemC).